A 597-amino-acid polypeptide reads, in one-letter code: Protein kinase C-like 3 (597 aa).

The region spanning 12–95 (DIKLKTRFHG…AELNIHVFVG (84 aa)) is the PB1 domain. The segment at 127-177 (GHRFQGKRLNRRIQCFICHDYIWGIGRQGFRCVDCRLCVHKKCHRHVRTHC) adopts a Phorbol-ester/DAG-type zinc-finger fold. The segment at 181-238 (PQGPNVPVAPSSGVGSLRGGRLDTSSSTTRSGGGIDNGAFHEHEIESPGSAKDMSRST) is disordered. The region spanning 253 to 522 (FRLLTVIGRG…LNDMKEHDFF (270 aa)) is the Protein kinase domain. Residues 259–267 (IGRGSYAKV) and Lys-282 contribute to the ATP site. The Proton acceptor role is filled by Asp-377. An AGC-kinase C-terminal domain is found at 524-595 (GFIDWEALEQ…VNPLQMSRED (72 aa)).

It belongs to the protein kinase superfamily. AGC Ser/Thr protein kinase family. PKC subfamily. In terms of assembly, interaction with par-3 required for the peripheral localization of par-6 and to form a par-3/par-6/pkc-3 complex, which is activated when cdc-42 interacts with par-6. Binds avidly to the phosphotyrosine interaction domain (PID) of a novel pkc-3 adapter protein num-1, which enables tethering and targeting of pkc-3 to the cell periphery. It depends on Mg(2+) as a cofactor.

Its subcellular location is the cytoplasm. The protein resides in the cytoskeleton. The enzyme catalyses L-seryl-[protein] + ATP = O-phospho-L-seryl-[protein] + ADP + H(+). It catalyses the reaction L-threonyl-[protein] + ATP = O-phospho-L-threonyl-[protein] + ADP + H(+). Functionally, required for the normal progression of embryogenesis and viability of the organism. Plays an indispensable role in establishing embryonic polarity and in recruiting and maintaining par-6 to the periphery, through interaction with par-3. Required for epithelial cell polarity in the distal spermatheca. Phosphorylates serine residues of num-1. Required for the expression of antimicrobial peptide nlp-29 in response in response to fungal infection or physical injury. This Caenorhabditis briggsae protein is Protein kinase C-like 3.